The sequence spans 432 residues: Bifunctional protein GlmU (432 aa).

Residues M1–K224 form a pyrophosphorylase region. Residues L9 to G12, K23, and G82 to T83 contribute to the UDP-N-acetyl-alpha-D-glucosamine site. D103 contributes to the Mg(2+) binding site. The UDP-N-acetyl-alpha-D-glucosamine site is built by G136, E150, N165, and N222. N222 contributes to the Mg(2+) binding site. The segment at F225–N245 is linker. The N-acetyltransferase stretch occupies residues G246–K432. Residues R309 and K326 each contribute to the UDP-N-acetyl-alpha-D-glucosamine site. H337 serves as the catalytic Proton acceptor. Y340 and N351 together coordinate UDP-N-acetyl-alpha-D-glucosamine. Acetyl-CoA-binding positions include N360 to Y361, S379, A397, and R414.

It in the N-terminal section; belongs to the N-acetylglucosamine-1-phosphate uridyltransferase family. The protein in the C-terminal section; belongs to the transferase hexapeptide repeat family. Homotrimer. The cofactor is Mg(2+).

It localises to the cytoplasm. The catalysed reaction is alpha-D-glucosamine 1-phosphate + acetyl-CoA = N-acetyl-alpha-D-glucosamine 1-phosphate + CoA + H(+). The enzyme catalyses N-acetyl-alpha-D-glucosamine 1-phosphate + UTP + H(+) = UDP-N-acetyl-alpha-D-glucosamine + diphosphate. It functions in the pathway nucleotide-sugar biosynthesis; UDP-N-acetyl-alpha-D-glucosamine biosynthesis; N-acetyl-alpha-D-glucosamine 1-phosphate from alpha-D-glucosamine 6-phosphate (route II): step 2/2. The protein operates within nucleotide-sugar biosynthesis; UDP-N-acetyl-alpha-D-glucosamine biosynthesis; UDP-N-acetyl-alpha-D-glucosamine from N-acetyl-alpha-D-glucosamine 1-phosphate: step 1/1. It participates in bacterial outer membrane biogenesis; LPS lipid A biosynthesis. Functionally, catalyzes the last two sequential reactions in the de novo biosynthetic pathway for UDP-N-acetylglucosamine (UDP-GlcNAc). The C-terminal domain catalyzes the transfer of acetyl group from acetyl coenzyme A to glucosamine-1-phosphate (GlcN-1-P) to produce N-acetylglucosamine-1-phosphate (GlcNAc-1-P), which is converted into UDP-GlcNAc by the transfer of uridine 5-monophosphate (from uridine 5-triphosphate), a reaction catalyzed by the N-terminal domain. In Campylobacter hominis (strain ATCC BAA-381 / DSM 21671 / CCUG 45161 / LMG 19568 / NCTC 13146 / CH001A), this protein is Bifunctional protein GlmU.